The following is an 828-amino-acid chain: Periplasmic nitrate reductase (828 aa).

Positions methionine 1 to alanine 31 form a signal peptide, tat-type signal. The region spanning isoleucine 39–aspartate 95 is the 4Fe-4S Mo/W bis-MGD-type domain. Cysteine 46, cysteine 49, cysteine 53, and cysteine 81 together coordinate [4Fe-4S] cluster. Mo-bis(molybdopterin guanine dinucleotide) is bound by residues lysine 83, glutamine 150, asparagine 175, cysteine 179, tryptophan 212–methionine 219, serine 243–histidine 247, glutamine 262–aspartate 264, methionine 372, glutamine 376, asparagine 482, serine 508–aspartate 509, lysine 531, aspartate 558, and threonine 718–threonine 727. Phenylalanine 794 contacts substrate. Asparagine 802 and lysine 819 together coordinate Mo-bis(molybdopterin guanine dinucleotide).

This sequence belongs to the prokaryotic molybdopterin-containing oxidoreductase family. NasA/NapA/NarB subfamily. Component of the periplasmic nitrate reductase NapAB complex composed of NapA and NapB. It depends on [4Fe-4S] cluster as a cofactor. Mo-bis(molybdopterin guanine dinucleotide) serves as cofactor. Post-translationally, predicted to be exported by the Tat system. The position of the signal peptide cleavage has not been experimentally proven.

Its subcellular location is the periplasm. It catalyses the reaction 2 Fe(II)-[cytochrome] + nitrate + 2 H(+) = 2 Fe(III)-[cytochrome] + nitrite + H2O. Its function is as follows. Catalytic subunit of the periplasmic nitrate reductase complex NapAB. Receives electrons from NapB and catalyzes the reduction of nitrate to nitrite. The sequence is that of Periplasmic nitrate reductase from Shigella boydii serotype 18 (strain CDC 3083-94 / BS512).